Here is a 154-residue protein sequence, read N- to C-terminus: Transcriptional repressor NrdR (154 aa).

A zinc finger lies at 3–34 (CPFCGNDETKVLESRQVEEGTAVRRRRECERC). The 91-residue stretch at 49 to 139 (LIVVKKDGRR…VYREFKDVQR (91 aa)) folds into the ATP-cone domain.

This sequence belongs to the NrdR family. Zn(2+) serves as cofactor.

In terms of biological role, negatively regulates transcription of bacterial ribonucleotide reductase nrd genes and operons by binding to NrdR-boxes. The sequence is that of Transcriptional repressor NrdR from Desulfitobacterium hafniense (strain DSM 10664 / DCB-2).